Consider the following 64-residue polypeptide: Conotoxin reg3.16 (64 aa).

The first 19 residues, 1 to 19, serve as a signal peptide directing secretion; the sequence is MSKLGVFLTICLLLFPLTA. A propeptide spanning residues 20–49 is cleaved from the precursor; it reads LQLDGDQPADKPAQRKLKILPKRKHWTRFT. Intrachain disulfides connect Cys50–Cys64, Cys51–Cys60, and Cys56–Cys63.

The protein belongs to the conotoxin M superfamily. Expressed by the venom duct.

Its subcellular location is the secreted. The chain is Conotoxin reg3.16 from Conus regius (Crown cone).